Reading from the N-terminus, the 686-residue chain is U-box domain-containing protein 19 (686 aa).

The U-box domain maps to 277–351 (LNVDDLRCPI…QSYSKQNGVV (75 aa)). 5 ARM repeats span residues 406–445 (TFYRSCLVEAGVVESLMKILRSDDPRIQENAMAGIMNLSK), 448–489 (AGKT…YLSS), 491–533 (GDYS…SLLM), 536–577 (PDNH…KMAE), and 579–620 (PDGM…NLCH).

It carries out the reaction S-ubiquitinyl-[E2 ubiquitin-conjugating enzyme]-L-cysteine + [acceptor protein]-L-lysine = [E2 ubiquitin-conjugating enzyme]-L-cysteine + N(6)-ubiquitinyl-[acceptor protein]-L-lysine.. Its pathway is protein modification; protein ubiquitination. Functions as an E3 ubiquitin ligase. In Arabidopsis thaliana (Mouse-ear cress), this protein is U-box domain-containing protein 19 (PUB19).